The following is a 1153-amino-acid chain: uncharacterized protein (1153 aa).

Disordered stretches follow at residues 164–193 (TTIKQLPPPLPQPQPQPHQQQPHNKKQIDD), 224–245 (DNYDDIDNNNNNNNNSNNDDDK), 294–316 (KSPQKLKLQQQQQQQQQQKQSKH), 332–427 (EHKL…KNKK), 613–648 (LSMLDSTNDGSSQEYEEEEEEEKNQKNFEKEEEGEN), 683–703 (QQQQQEKEKQQQEKQQDEEMS), 717–740 (KSDDNNNNNDNNNNNNNNQTSKRK), 772–819 (NKKL…KTIE), 838–874 (ASSGGSNNNNNNDQNDSITTKEKERSETIKTHNEDEK), and 942–1106 (NNNN…NNEV). The span at 169–179 (LPPPLPQPQPQ) shows a compositional bias: pro residues. 4 stretches are compositionally biased toward low complexity: residues 231–240 (NNNNNNNNSN), 298–312 (KLKLQQQQQQQQQQK), 336–391 (QQQQ…TPKK), and 399–423 (NNVNNNNNNNNNNNNNNNNNNNNNN). Over residues 613-625 (LSMLDSTNDGSSQ) the composition is skewed to polar residues. Basic and acidic residues predominate over residues 687 to 699 (QEKEKQQQEKQQD). Residues 721-734 (NNNNNDNNNNNNNN) are compositionally biased toward low complexity. The segment covering 772–784 (NKKLRVDSEDQQT) has biased composition (basic and acidic residues). 2 stretches are compositionally biased toward low complexity: residues 788–808 (TTTTTTTTTTTNTNNNNNNNN) and 839–854 (SSGGSNNNNNNDQNDS). Positions 856–874 (TTKEKERSETIKTHNEDEK) are enriched in basic and acidic residues. The segment covering 942–987 (NNNNNNNNNINNINNIGNKNTTVNNSNHSNHSNNNINNNNIFKNSN) has biased composition (low complexity). Polar residues-rich tracts occupy residues 988–998 (PIVDTNFSSTT) and 1005–1015 (QSKIFTGNQLP). A compositionally biased stretch (low complexity) spans 1019–1059 (INNENVVNNNNNNEINNTTTTTTNNNSGIHKNNNNYNSDNS). Residues 1064–1081 (DGLKQEKEEQKEEQKENK) are compositionally biased toward basic and acidic residues. Positions 1082–1105 (NNNNNNNNNNNNNNNNNNNNNNNE) are enriched in low complexity.

This is an uncharacterized protein from Dictyostelium discoideum (Social amoeba).